Reading from the N-terminus, the 559-residue chain is Asparagine--tRNA ligase, cytoplasmic (559 aa).

Ser-72 is modified (phosphoserine). Residues Lys-255 and Lys-501 each carry the N6-acetyllysine modification.

This sequence belongs to the class-II aminoacyl-tRNA synthetase family.

Its subcellular location is the cytoplasm. The catalysed reaction is tRNA(Asn) + L-asparagine + ATP = L-asparaginyl-tRNA(Asn) + AMP + diphosphate + H(+). In Bos taurus (Bovine), this protein is Asparagine--tRNA ligase, cytoplasmic (NARS).